The sequence spans 352 residues: Photosystem II protein D1 (352 aa).

Threonine 2 carries the post-translational modification N-acetylthreonine. Threonine 2 carries the phosphothreonine modification. The next 3 helical transmembrane spans lie at 29–46 (YIGWFGVIMIPTLLTATS), 118–133 (HFLLGVCCYMGREWEL), and 142–156 (WIAVAYSAPVAAATA). Histidine 118 contributes to the chlorophyll a binding site. Tyrosine 126 lines the pheophytin a pocket. Residues aspartate 170 and glutamate 189 each contribute to the [CaMn4O5] cluster site. The chain crosses the membrane as a helical span at residues 197-218 (FHMLGVAGVFGGSLFSAMHGSL). Residue histidine 198 participates in chlorophyll a binding. Residues histidine 215 and 264–265 (SF) each bind a quinone. A Fe cation-binding site is contributed by histidine 215. A Fe cation-binding site is contributed by histidine 272. Residues 274-288 (FLAAWPVVGIWFTAL) form a helical membrane-spanning segment. 4 residues coordinate [CaMn4O5] cluster: histidine 332, glutamate 333, aspartate 342, and alanine 344. The propeptide occupies 345 to 352 (SVEAPVVG).

This sequence belongs to the reaction center PufL/M/PsbA/D family. In terms of assembly, PSII is composed of 1 copy each of membrane proteins PsbA, PsbB, PsbC, PsbD, PsbE, PsbF, PsbH, PsbI, PsbJ, PsbK, PsbL, PsbM, PsbT, PsbX, PsbY, PsbZ, Psb30/Ycf12, at least 3 peripheral proteins of the oxygen-evolving complex and a large number of cofactors. It forms dimeric complexes. The D1/D2 heterodimer binds P680, chlorophylls that are the primary electron donor of PSII, and subsequent electron acceptors. It shares a non-heme iron and each subunit binds pheophytin, quinone, additional chlorophylls, carotenoids and lipids. D1 provides most of the ligands for the Mn4-Ca-O5 cluster of the oxygen-evolving complex (OEC). There is also a Cl(-1) ion associated with D1 and D2, which is required for oxygen evolution. The PSII complex binds additional chlorophylls, carotenoids and specific lipids. is required as a cofactor. In terms of processing, tyr-161 forms a radical intermediate that is referred to as redox-active TyrZ, YZ or Y-Z. Post-translationally, C-terminally processed by CTPA; processing is essential to allow assembly of the oxygen-evolving complex and thus photosynthetic growth.

Its subcellular location is the plastid. The protein localises to the chloroplast thylakoid membrane. It carries out the reaction 2 a plastoquinone + 4 hnu + 2 H2O = 2 a plastoquinol + O2. Photosystem II (PSII) is a light-driven water:plastoquinone oxidoreductase that uses light energy to abstract electrons from H(2)O, generating O(2) and a proton gradient subsequently used for ATP formation. It consists of a core antenna complex that captures photons, and an electron transfer chain that converts photonic excitation into a charge separation. The D1/D2 (PsbA/PsbD) reaction center heterodimer binds P680, the primary electron donor of PSII as well as several subsequent electron acceptors. In Zygnema circumcarinatum (Green alga), this protein is Photosystem II protein D1.